The chain runs to 392 residues: Dual-specificity RNA methyltransferase RlmN (392 aa).

The active-site Proton acceptor is the Glu-115. One can recognise a Radical SAM core domain in the interval 121–358; it reads EVDRGTLCIS…YKAGYASPIR (238 aa). A disulfide bridge connects residues Cys-128 and Cys-369. Residues Cys-135, Cys-139, and Cys-142 each coordinate [4Fe-4S] cluster. Residues 195–196, Ser-227, 249–251, and Asn-326 contribute to the S-adenosyl-L-methionine site; these read GE and SFH. The active-site S-methylcysteine intermediate is Cys-369.

Belongs to the radical SAM superfamily. RlmN family. The cofactor is [4Fe-4S] cluster.

The protein localises to the cytoplasm. The enzyme catalyses adenosine(2503) in 23S rRNA + 2 reduced [2Fe-2S]-[ferredoxin] + 2 S-adenosyl-L-methionine = 2-methyladenosine(2503) in 23S rRNA + 5'-deoxyadenosine + L-methionine + 2 oxidized [2Fe-2S]-[ferredoxin] + S-adenosyl-L-homocysteine. It carries out the reaction adenosine(37) in tRNA + 2 reduced [2Fe-2S]-[ferredoxin] + 2 S-adenosyl-L-methionine = 2-methyladenosine(37) in tRNA + 5'-deoxyadenosine + L-methionine + 2 oxidized [2Fe-2S]-[ferredoxin] + S-adenosyl-L-homocysteine. Specifically methylates position 2 of adenine 2503 in 23S rRNA and position 2 of adenine 37 in tRNAs. m2A2503 modification seems to play a crucial role in the proofreading step occurring at the peptidyl transferase center and thus would serve to optimize ribosomal fidelity. The polypeptide is Dual-specificity RNA methyltransferase RlmN (Jannaschia sp. (strain CCS1)).